A 287-amino-acid polypeptide reads, in one-letter code: Iodotyrosine deiodinase (287 aa).

A helical transmembrane segment spans residues 15–34 (HWPSLFITLALIWIVKRLFF). FMN-binding positions include 96-100 (RRSIR), Ser-125, and 125-126 (SG). 3,5-diiodo-L-tyrosine-binding residues include Ala-127, Glu-154, Tyr-158, and Lys-179. Residues Ala-127, Glu-154, Tyr-158, and Lys-179 each coordinate 3-iodo-L-tyrosine. FMN-binding positions include 235 to 237 (VTT) and Arg-277.

It belongs to the nitroreductase family. Homodimer. It depends on FMN as a cofactor. In terms of tissue distribution, expressed in spermatocytes.

The protein resides in the cell membrane. It catalyses the reaction 2 iodide + L-tyrosine + 2 NADP(+) = 3,5-diiodo-L-tyrosine + 2 NADPH + H(+). The enzyme catalyses iodide + L-tyrosine + NADP(+) = 3-iodo-L-tyrosine + NADPH. It carries out the reaction 3-iodo-L-tyrosine + iodide + NADP(+) = 3,5-diiodo-L-tyrosine + NADPH + H(+). The catalysed reaction is L-tyrosine + chloride + NADP(+) = 3-chloro-L-tyrosine + NADPH. It catalyses the reaction bromide + L-tyrosine + NADP(+) = 3-bromo-L-tyrosine + NADPH. In terms of biological role, catalyzes the dehalogenation of halotyrosines such as 3-bromo-L-tyrosine, 3-chloro-L-tyrosine, 3-iodo-L-tyrosine and 3,5-diiodo-L-tyrosine. Activity towards 3-fluoro-L-tyrosine is weak. Important for male and female fertility. May be involved in maintaining the viability of sperm, both during development in the testes and storage in the female spermatheca. The polypeptide is Iodotyrosine deiodinase (Drosophila melanogaster (Fruit fly)).